Consider the following 72-residue polypeptide: Conotoxin VnMKLT2-021 (72 aa).

The signal sequence occupies residues 1 to 22 (MKLTCVLIVAVLFLTACQLTTA). The propeptide occupies 23 to 45 (ASYARSEREHPDLGSSDQNSKLT). Residues 25–44 (YARSEREHPDLGSSDQNSKL) form a disordered region. 3 disulfides stabilise this stretch: Cys48-Cys62, Cys55-Cys66, and Cys61-Cys71.

Belongs to the conotoxin O1 superfamily. Expressed by the venom duct.

The protein resides in the secreted. The protein is Conotoxin VnMKLT2-021 of Conus ventricosus (Mediterranean cone).